A 428-amino-acid chain; its full sequence is MERRRVTSATRRSYVSSSEMVVGGRRLGPGTRLSLARMPPPLPARVDFSLAGALNSGFKETRASERAEMMELNDRFASYIEKVRFLEQQNKALAAELNQLRAKEPTKLADVYQAELRELRLRLDQLTANSARLEVERDNLAQDLGTLRQKLQDETNQRLEAENNLAAYRQEADEATLARLDLERKIESLEEEIRFLRKIHEEEVRELQEQLAQQQVHVEMDVAKPDLTAALREIRTQYEAVASSNMHEAEEWYRSKFADLNDAAARNAELLRQAKHEANDYRRQLQALTCDLESLRGTNESLERQMREQEERHAREAASYQEALARLEEEGQSLKDEMARHLQEYQDLLNVKLALDIEIATYRKLLEGEENRITIPVQTFSNLQIRETSLDTKSVSEGHLKRNIVVKTVEMRDGEVIKESKQEHKDVM.

The segment at 1-68 (MERRRVTSAT…KETRASERAE (68 aa)) is head. Thr7 is modified (phosphothreonine; by AURKB and ROCK1). Arg12 carries the omega-N-methylarginine modification. Position 13 is a phosphoserine; by AURKB and ROCK1 (Ser13). Arg26 and Arg32 each carry citrulline. Ser34 is modified (phosphoserine; by AURKB and ROCK1). The IF rod domain maps to 65–373 (ERAEMMELND…KLLEGEENRI (309 aa)). The coil 1A stretch occupies residues 69-100 (MMELNDRFASYIEKVRFLEQQNKALAAELNQL). Ser78 bears the Phosphoserine mark. The segment at 101–111 (RAKEPTKLADV) is linker 1. Thr106 and Thr146 each carry phosphothreonine. A coil 1B region spans residues 112–210 (YQAELRELRL…EEEVRELQEQ (99 aa)). The segment at 211–226 (LAQQQVHVEMDVAKPD) is linker 12. The segment at 227–248 (LTAALREIRTQYEAVASSNMHE) is coil 2A. The interval 249 to 252 (AEEW) is linker 2. Residues 253–373 (YRSKFADLND…KLLEGEENRI (121 aa)) are coil 2B. Position 266 is a citrulline (Arg266). Ser319 is subject to Phosphoserine. The segment at 374–428 (TIPVQTFSNLQIRETSLDTKSVSEGHLKRNIVVKTVEMRDGEVIKESKQEHKDVM) is tail. The residue at position 379 (Thr379) is a Phosphothreonine. Ser381 carries the phosphoserine modification. Citrulline is present on residues Arg402 and Arg412.

Belongs to the intermediate filament family. In terms of assembly, interacts with SYNM. Phosphorylated by PKN1.

The protein resides in the cytoplasm. Functionally, GFAP, a class-III intermediate filament, is a cell-specific marker that, during the development of the central nervous system, distinguishes astrocytes from other glial cells. The chain is Glial fibrillary acidic protein (GFAP) from Bos taurus (Bovine).